Here is a 160-residue protein sequence, read N- to C-terminus: Baculoviral IAP repeat-containing protein 5.1 (160 aa).

The BIR repeat unit spans residues 27–97 (RLATFADWPF…KRSASCGFLS (71 aa)). Thr43 carries the phosphothreonine; by CDK1 modification. Residues Cys66, Cys69, His86, and Cys93 each coordinate Zn(2+).

It belongs to the IAP family. Component of the CPC at least composed of survivin/birc5, incenp, cdca8/borealin and/or cdca9/dasra-A, and aurkb/aurora-B. Interacts directly with incenp (via N-terminus), and may weakly interact with aurkb (via N-terminus) to stabilize the complex. Interacts with GTP-bound ran in both the S and M phases of the cell cycle. Also found in a complex with ubiquitin-mediated signaling proteins including at least usp9x/xFAM, nploc4/npl4 and ufd1. Ubiquitination is required for centrosome-targeting.

The protein localises to the cytoplasm. Its subcellular location is the nucleus. It localises to the chromosome. It is found in the centromere. The protein resides in the cytoskeleton. The protein localises to the spindle. Functionally, component of the chromosomal passenger complex (CPC), a complex that acts as a key regulator of mitosis. The CPC complex has essential functions at the centromere in ensuring correct chromosome alignment and segregation and is required for chromatin-induced microtubule stabilization and spindle assembly. Stimulates the mitotic kinase activity of aurkb/aurora-B in the CPC. Does not appear to exhibit anti-apoptotic activity. The polypeptide is Baculoviral IAP repeat-containing protein 5.1 (birc5.1) (Xenopus tropicalis (Western clawed frog)).